The sequence spans 350 residues: Cephaeline 6'-O-methyltransferase IpeOMT1 (350 aa).

Residues glycine 193, aspartate 216, aspartate 236, methionine 237, and lysine 250 each contribute to the S-adenosyl-L-methionine site. Residue histidine 254 is the Proton acceptor of the active site.

Belongs to the class I-like SAM-binding methyltransferase superfamily. Cation-independent O-methyltransferase family. Expressed in roots.

The protein localises to the cytoplasm. It is found in the cytosol. It catalyses the reaction cephaeline + S-adenosyl-L-methionine = emetine + S-adenosyl-L-homocysteine + H(+). It carries out the reaction deacetylisoipecoside + S-adenosyl-L-methionine = 6-O-methyldeacetylisoipecoside + S-adenosyl-L-homocysteine + H(+). The catalysed reaction is 7-O-methyldeacetylisoipecoside + S-adenosyl-L-methionine = 6,7-O,O-dimethyldeacetylisoipecoside + S-adenosyl-L-homocysteine + H(+). The enzyme catalyses norcoclaurine + S-adenosyl-L-methionine = coclaurine + S-adenosyl-L-homocysteine + H(+). It catalyses the reaction (S)-norprotosinomenine + S-adenosyl-L-methionine = (S)-6-O-methylnorprotosinomenine + S-adenosyl-L-homocysteine + H(+). It carries out the reaction (R)-norprotosinomenine + S-adenosyl-L-methionine = (R)-6-O-methylnorprotosinomenine + S-adenosyl-L-homocysteine + H(+). The protein operates within alkaloid biosynthesis. In terms of biological role, O-methyltransferase involved in the biosynthesis of ipecac and benzylisoquinoline monoterpenoid-isoquinoline alkaloids natural products, starting by the condensation of dopamine and secologanin, and including emetine and cephaeline, drugs used both as anti-protozoal (e.g. treatment of ameobiasis) and as emetic agents. Mediates cephaeline 6'-O-methylation to produce emetine. Catalyzes the 6-O-methylation of N-deacetylisoipecoside, 7-O-methyl-N-deacetylisoipecoside, isococlaurine, norcoclaurine, (S)-norprotosinomenine and (R)-norprotosinomenine, and, with a lower efficiency, of 4'-O-methyllaudanosoline, isoorientaline and protosinomenine. Supports also the 4'-O-methylation of nororientaline. The chain is Cephaeline 6'-O-methyltransferase IpeOMT1 from Carapichea ipecacuanha (Ipecac).